The sequence spans 314 residues: Olfactory receptor 1Q1 (314 aa).

The Extracellular segment spans residues 1-25; that stretch reads MDNSNWTSVSHFVLLGISTHPEEQI. An N-linked (GlcNAc...) asparagine glycan is attached at Asn5. Residues 26-49 form a helical membrane-spanning segment; it reads PLFLVFSLMYAINISGNLAIITLI. At 50-57 the chain is on the cytoplasmic side; the sequence is LSAPRLHI. The helical transmembrane segment at 58-79 threads the bilayer; that stretch reads PMYIFLSNLALTDICFTSTTVP. At 80-100 the chain is on the extracellular side; that stretch reads KMLQIIFSPTKVISYTGCLAQ. Cys97 and Cys189 form a disulfide bridge. A helical membrane pass occupies residues 101 to 120; that stretch reads TYFFICFAVMENFILAVMAY. Residues 121–139 are Cytoplasmic-facing; the sequence is DRYIAICHPFHYTMILTRM. The helical transmembrane segment at 140–158 threads the bilayer; that stretch reads LCVKMVVMCHALSHLHAML. At 159-195 the chain is on the extracellular side; it reads HTFLIGQLIFCADNRIPHFFCDLYALMKISCTSTYLN. The helical transmembrane segment at 196-219 threads the bilayer; that stretch reads TLMIHTEGAVVISGALAFITASYA. The Cytoplasmic portion of the chain corresponds to 220-236; sequence CIILVVLRIPSAKGRWK. A helical transmembrane segment spans residues 237 to 259; that stretch reads TFSTCGSHLTVVAIFYGTLSWVY. Residues 260-272 are Extracellular-facing; sequence FRPLSSYSVTKGR. The chain crosses the membrane as a helical span at residues 273–292; that stretch reads IITVVYTVVTPMLNPFIYSL. Topologically, residues 293–314 are cytoplasmic; it reads RNGDVKGGFMKWMSRMQTFFFR.

It belongs to the G-protein coupled receptor 1 family.

Its subcellular location is the cell membrane. Its function is as follows. Odorant receptor. In Homo sapiens (Human), this protein is Olfactory receptor 1Q1 (OR1Q1).